The following is a 1073-amino-acid chain: Ubiquitin carboxyl-terminal hydrolase 53 (1073 aa).

Residues 30-351 (KGLLNEPGQN…QPLLLFYANP (322 aa)) form the USP domain. Cysteine 41 serves as the catalytic Nucleophile. Residues histidine 66, cysteine 68, cysteine 73, cysteine 76, histidine 132, cysteine 144, cysteine 149, histidine 152, cysteine 165, cysteine 168, cysteine 224, and cysteine 228 each contribute to the Zn(2+) site. Histidine 301 acts as the Proton acceptor in catalysis. 2 disordered regions span residues 391–437 (LKEN…HIDQ) and 485–636 (LSHF…PKQK). Positions 407–418 (KFPTDNISSSNR) are enriched in polar residues. Positions 524–541 (QSRASAQIISSSKSQILA) are enriched in low complexity. Polar residues predominate over residues 553–563 (DNGTGYDTDSS). Positions 612–627 (NISNKPKSSKDPSFSN) are enriched in low complexity.

Belongs to the peptidase C19 family. As to quaternary structure, interacts (via the C-terminal region) with the heterodimer TJP1:TJP2. As to expression, expressed predominantly in skeletal muscle and heart.

It localises to the cell junction. The protein resides in the tight junction. The catalysed reaction is Thiol-dependent hydrolysis of ester, thioester, amide, peptide and isopeptide bonds formed by the C-terminal Gly of ubiquitin (a 76-residue protein attached to proteins as an intracellular targeting signal).. Deubiquitinase that mediates 'Lys-63'-linked deubiquitination of tight junction proteins, such as MARVELD2 and LSR, and which is involved in the survival of auditory hair cells and hearing. Specifically cleaves 'Lys-63'-linked polyubiquitin chains composed of at least 3 ubiquitin molecules, while it is not able to deubiquitinate substrates with shorter ubiquitin chains: recognizes ubiquitin chain in position S2 and catalyzes en bloc cleavage of polyubiquitin chains from substrate proteins. Probably acts by modulating the barrier properties and mechanical stability of tight junctions via deubiquitination of MARVELD2 and LSR. This chain is Ubiquitin carboxyl-terminal hydrolase 53, found in Homo sapiens (Human).